The chain runs to 190 residues: Hypoxanthine/guanine phosphoribosyltransferase (190 aa).

This sequence belongs to the purine/pyrimidine phosphoribosyltransferase family. Archaeal HPRT subfamily. Homodimer.

It localises to the cytoplasm. The catalysed reaction is IMP + diphosphate = hypoxanthine + 5-phospho-alpha-D-ribose 1-diphosphate. It catalyses the reaction GMP + diphosphate = guanine + 5-phospho-alpha-D-ribose 1-diphosphate. The protein operates within purine metabolism; IMP biosynthesis via salvage pathway; IMP from hypoxanthine: step 1/1. Catalyzes a salvage reaction resulting in the formation of IMP that is energically less costly than de novo synthesis. The sequence is that of Hypoxanthine/guanine phosphoribosyltransferase from Methanothrix thermoacetophila (strain DSM 6194 / JCM 14653 / NBRC 101360 / PT) (Methanosaeta thermophila).